The sequence spans 362 residues: tRNA N6-adenosine threonylcarbamoyltransferase (362 aa).

The Fe cation site is built by His-120 and His-124. Residues 142–146 (LASGG), Asp-175, Gly-188, and Asn-288 contribute to the substrate site. Asp-316 contributes to the Fe cation binding site. Residues 342 to 351 (RPRWPLDPDA) are compositionally biased toward basic and acidic residues. Residues 342–362 (RPRWPLDPDAPKAAGAGGVKA) form a disordered region.

This sequence belongs to the KAE1 / TsaD family. Fe(2+) serves as cofactor.

The protein localises to the cytoplasm. The enzyme catalyses L-threonylcarbamoyladenylate + adenosine(37) in tRNA = N(6)-L-threonylcarbamoyladenosine(37) in tRNA + AMP + H(+). Required for the formation of a threonylcarbamoyl group on adenosine at position 37 (t(6)A37) in tRNAs that read codons beginning with adenine. Is involved in the transfer of the threonylcarbamoyl moiety of threonylcarbamoyl-AMP (TC-AMP) to the N6 group of A37, together with TsaE and TsaB. TsaD likely plays a direct catalytic role in this reaction. This chain is tRNA N6-adenosine threonylcarbamoyltransferase, found in Rhodospirillum rubrum (strain ATCC 11170 / ATH 1.1.1 / DSM 467 / LMG 4362 / NCIMB 8255 / S1).